The following is a 320-amino-acid chain: Cytochrome c biogenesis protein CcsA (320 aa).

A run of 8 helical transmembrane segments spans residues 14–34, 37–57, 68–88, 97–117, 143–163, 228–248, 263–283, and 289–309; these read SFFL…YINI, ITIL…TFLL, LSNL…IHLI, WLGI…TLSL, MMLS…ILII, VISL…VWAN, WALI…IKGW, and AIIA…VNLL.

This sequence belongs to the CcmF/CycK/Ccl1/NrfE/CcsA family. As to quaternary structure, may interact with Ccs1.

The protein localises to the plastid. Its subcellular location is the chloroplast thylakoid membrane. Its function is as follows. Required during biogenesis of c-type cytochromes (cytochrome c6 and cytochrome f) at the step of heme attachment. The chain is Cytochrome c biogenesis protein CcsA from Marchantia polymorpha (Common liverwort).